The primary structure comprises 92 residues: Small cysteine and glycine repeat-containing protein 9 (92 aa).

The interval 4 to 72 (CGCGSCGCSG…CCRRTCSSCG (69 aa)) is 11 X 2 AA repeats of CG.

Belongs to the KRTAP type 28 family.

Functionally, in the hair cortex, hair keratin intermediate filaments are embedded in an interfilamentous matrix, consisting of hair keratin-associated proteins (KRTAP), which are essential for the formation of a rigid and resistant hair shaft through their extensive disulfide bond cross-linking with abundant cysteine residues of hair keratins. The matrix proteins include the high-sulfur and high-glycine-tyrosine keratins. This is Small cysteine and glycine repeat-containing protein 9 from Homo sapiens (Human).